The following is a 458-amino-acid chain: Ammonium transporter Rh type B (458 aa).

Residues 1–13 are Cytoplasmic-facing; that stretch reads MAKSPRRVAGRRL. The helical transmembrane segment at 14–34 threads the bilayer; that stretch reads LLPLLCLFFQGATAILFAIFV. Over 35 to 61 the chain is Extracellular; sequence RYDQQTDAALWHGGNHSNADNEFYFRY. The N-linked (GlcNAc...) asparagine glycan is linked to N49. The chain crosses the membrane as a helical span at residues 62-82; sequence PSFQDVHAMVFVGFGFLMVFL. The Cytoplasmic segment spans residues 83–86; sequence QRYG. Residues 87 to 107 form a helical membrane-spanning segment; sequence YSSLGFTFLLGAFALQWATLV. The Extracellular segment spans residues 108–124; that stretch reads QGFLHSFHGGHIHVGME. The helical transmembrane segment at 125–145 threads the bilayer; it reads SLINADFCAGAVLISFGAVLG. Topologically, residues 146 to 149 are cytoplasmic; that stretch reads KTGP. Residues 150 to 170 form a helical membrane-spanning segment; it reads AQLLLMALLEVALFGLNEFVL. Topologically, residues 171–178 are extracellular; sequence LCLLGVRD. Residues 179 to 201 traverse the membrane as a helical segment; that stretch reads AGGSMTIHTFGAYFGLVLSRVLY. Residues 202-219 are Cytoplasmic-facing; it reads RPHLEKSQHRQGSVYHSD. Residues 220–240 form a helical membrane-spanning segment; it reads LFAMIGTIFLWIFWPSFNSAL. Topologically, residues 241 to 251 are extracellular; sequence TSRGDGQPRTA. The helical transmembrane segment at 252-272 threads the bilayer; sequence LNTYYSLTASTLSTFALSALV. The Cytoplasmic portion of the chain corresponds to 273-282; sequence GKDGRLDMVH. Residues 283–303 form a helical membrane-spanning segment; that stretch reads VQNAALAGGVVVGTASEMMLT. P304 is a topological domain (extracellular). Residues 305 to 325 traverse the membrane as a helical segment; that stretch reads FGALAAGCLAGAISTLGYKFF. The Cytoplasmic portion of the chain corresponds to 326-346; the sequence is TPILESKLKIQDTCGVHNLHG. A helical transmembrane segment spans residues 347–367; it reads MPGVLGALLGALMTGLTTHEA. Topologically, residues 368 to 393 are extracellular; it reads YGDGLQSVFPLIAEGQRSATSQAIYQ. Residues 394 to 414 traverse the membrane as a helical segment; sequence LFGLSVTLLFASAGGVLGGLL. The Cytoplasmic portion of the chain corresponds to 415 to 458; sequence LKLPFLDAPPDSQCYEDQMCWEVPGEHGYEAQEALRVEEPDTEA. Positions 416-424 are interaction with ANK3; the sequence is KLPFLDAPP. Residues 429-432 carry the Basolateral sorting signal motif; the sequence is YEDQ.

Belongs to the ammonium transporter (TC 2.A.49) family. Rh subfamily. As to quaternary structure, interacts (via C-terminus) with ANK2 and ANK3; required for targeting to the basolateral membrane. Post-translationally, N-glycosylated.

Its subcellular location is the cell membrane. It is found in the basolateral cell membrane. It catalyses the reaction NH4(+)(in) = NH4(+)(out). It carries out the reaction methylamine(out) = methylamine(in). The catalysed reaction is CO2(out) = CO2(in). Its function is as follows. Ammonium transporter involved in the maintenance of acid-base homeostasis. Transports ammonium and its related derivative methylammonium across the basolateral plasma membrane of epithelial cells likely contributing to renal transepithelial ammonia transport and ammonia metabolism. May transport either NH4(+) or NH3 ammonia species predominantly mediating an electrogenic NH4(+) transport. May act as a CO2 channel providing for renal acid secretion. In Oryctolagus cuniculus (Rabbit), this protein is Ammonium transporter Rh type B (RHBG).